We begin with the raw amino-acid sequence, 445 residues long: C-terminal-binding protein 2 (445 aa).

R22 is subject to Asymmetric dimethylarginine. NAD(+) is bound by residues S106, I186–T191, D210, C243–N249, A270–R272, and D296. R272 is a catalytic residue. E301 is a catalytic residue. Catalysis depends on H321, which acts as the Proton donor. An NAD(+)-binding site is contributed by H321 to W324. Residues T414 to Q445 form a disordered region. S428 is subject to Phosphoserine; by HIPK2. Basic and acidic residues predominate over residues K434–Q445.

Belongs to the D-isomer specific 2-hydroxyacid dehydrogenase family. In terms of assembly, interacts with HIPK2 and PNN. Interacts with the transcription factors ZNF217, BKLF, delta EF1/AREB6/ZEB, EVI-1 and Friend of GATA (FOG) via the consensus motif P-X-[DNS]-L-[STVA]. Also interacts with the C-terminus of adenovirus E1A protein. Can form a complex with BKLF on a CACCC-box oligonucleotide. Can form homodimers or heterodimers of CTBP1 and CTBP2. Interacts with NRIP1 and WIZ. Interacts with PRDM16; represses white adipose tissue (WAT)-specific genes expression. Interacts with MCRIP1. Post-translationally, phosphorylation by HIPK2 on Ser-428 induces proteasomal degradation. In terms of tissue distribution, found in all tissues except spleen and liver.

Its subcellular location is the nucleus. The protein resides in the synapse. Functionally, corepressor targeting diverse transcription regulators. Isoform 2 probably acts as a scaffold for specialized synapses. Functions in brown adipose tissue (BAT) differentiation. This chain is C-terminal-binding protein 2 (Ctbp2), found in Mus musculus (Mouse).